We begin with the raw amino-acid sequence, 253 residues long: Ubiquinone/menaquinone biosynthesis C-methyltransferase UbiE (253 aa).

Residues T76, D97, and N125–A126 contribute to the S-adenosyl-L-methionine site.

The protein belongs to the class I-like SAM-binding methyltransferase superfamily. MenG/UbiE family.

The enzyme catalyses a 2-demethylmenaquinol + S-adenosyl-L-methionine = a menaquinol + S-adenosyl-L-homocysteine + H(+). It carries out the reaction a 2-methoxy-6-(all-trans-polyprenyl)benzene-1,4-diol + S-adenosyl-L-methionine = a 5-methoxy-2-methyl-3-(all-trans-polyprenyl)benzene-1,4-diol + S-adenosyl-L-homocysteine + H(+). Its pathway is quinol/quinone metabolism; menaquinone biosynthesis; menaquinol from 1,4-dihydroxy-2-naphthoate: step 2/2. It participates in cofactor biosynthesis; ubiquinone biosynthesis. Its function is as follows. Methyltransferase required for the conversion of demethylmenaquinol (DMKH2) to menaquinol (MKH2) and the conversion of 2-polyprenyl-6-methoxy-1,4-benzoquinol (DDMQH2) to 2-polyprenyl-3-methyl-6-methoxy-1,4-benzoquinol (DMQH2). The polypeptide is Ubiquinone/menaquinone biosynthesis C-methyltransferase UbiE (Bradyrhizobium sp. (strain BTAi1 / ATCC BAA-1182)).